The sequence spans 444 residues: Probable D-serine dehydratase (444 aa).

Lys118 is subject to N6-(pyridoxal phosphate)lysine.

This sequence belongs to the serine/threonine dehydratase family. DsdA subfamily. Requires pyridoxal 5'-phosphate as cofactor.

The enzyme catalyses D-serine = pyruvate + NH4(+). This Acinetobacter baumannii (strain ACICU) protein is Probable D-serine dehydratase.